The following is a 121-amino-acid chain: uncharacterized protein (121 aa).

Positions 20 to 98 are disordered; sequence NEVRTSQSEV…PYYHGSKAST (79 aa). Basic and acidic residues predominate over residues 35–51; the sequence is KKSDNGEKDEKEEKELN.

This is an uncharacterized protein from Invertebrate iridescent virus 6 (IIV-6).